A 310-amino-acid chain; its full sequence is DNA damage-repair/toleration protein DRT102 (310 aa).

Residue A2 is modified to N-acetylalanine. A Cupin type-2 domain is found at 219 to 282 (IVRFKAGSVE…HRVKYHEDTE (64 aa)).

The protein is DNA damage-repair/toleration protein DRT102 (DRT102) of Arabidopsis thaliana (Mouse-ear cress).